We begin with the raw amino-acid sequence, 443 residues long: Probable glycine dehydrogenase (decarboxylating) subunit 1 (443 aa).

The protein belongs to the GcvP family. N-terminal subunit subfamily. As to quaternary structure, the glycine cleavage system is composed of four proteins: P, T, L and H. In this organism, the P 'protein' is a heterodimer of two subunits.

The catalysed reaction is N(6)-[(R)-lipoyl]-L-lysyl-[glycine-cleavage complex H protein] + glycine + H(+) = N(6)-[(R)-S(8)-aminomethyldihydrolipoyl]-L-lysyl-[glycine-cleavage complex H protein] + CO2. Its function is as follows. The glycine cleavage system catalyzes the degradation of glycine. The P protein binds the alpha-amino group of glycine through its pyridoxal phosphate cofactor; CO(2) is released and the remaining methylamine moiety is then transferred to the lipoamide cofactor of the H protein. This chain is Probable glycine dehydrogenase (decarboxylating) subunit 1, found in Maridesulfovibrio salexigens (strain ATCC 14822 / DSM 2638 / NCIMB 8403 / VKM B-1763) (Desulfovibrio salexigens).